Consider the following 164-residue polypeptide: SsrA-binding protein (164 aa).

The protein belongs to the SmpB family.

Its subcellular location is the cytoplasm. Its function is as follows. Required for rescue of stalled ribosomes mediated by trans-translation. Binds to transfer-messenger RNA (tmRNA), required for stable association of tmRNA with ribosomes. tmRNA and SmpB together mimic tRNA shape, replacing the anticodon stem-loop with SmpB. tmRNA is encoded by the ssrA gene; the 2 termini fold to resemble tRNA(Ala) and it encodes a 'tag peptide', a short internal open reading frame. During trans-translation Ala-aminoacylated tmRNA acts like a tRNA, entering the A-site of stalled ribosomes, displacing the stalled mRNA. The ribosome then switches to translate the ORF on the tmRNA; the nascent peptide is terminated with the 'tag peptide' encoded by the tmRNA and targeted for degradation. The ribosome is freed to recommence translation, which seems to be the essential function of trans-translation. The polypeptide is SsrA-binding protein (Corynebacterium glutamicum (strain R)).